The sequence spans 203 residues: MIIKENSDKQTQIYNFLIEFTKSKGYPPSVREICQAVSLKSTSTVHGHLKRLEKKGLIYRDPTKPRALEIVELSNEEKELIDIPIVGKVTAGMPILATENIEDMFQIPINYVKHNNDLFILKVTGDSMIEAGILDGDLAIIEQKNIATNGDIVVALIENEATIKRFFKENGFIRLQPENKNYEPIIVEDCSILGKLVGIYRAY.

A DNA-binding region (H-T-H motif) is located at residues 30-50; sequence VREICQAVSLKSTSTVHGHLK. Residues Ser127 and Lys164 each act as for autocatalytic cleavage activity in the active site.

The protein belongs to the peptidase S24 family. In terms of assembly, homodimer.

It catalyses the reaction Hydrolysis of Ala-|-Gly bond in repressor LexA.. Its function is as follows. Represses a number of genes involved in the response to DNA damage (SOS response), including recA and lexA. In the presence of single-stranded DNA, RecA interacts with LexA causing an autocatalytic cleavage which disrupts the DNA-binding part of LexA, leading to derepression of the SOS regulon and eventually DNA repair. The sequence is that of LexA repressor from Clostridium perfringens (strain SM101 / Type A).